The primary structure comprises 354 residues: Dihydroflavonol 4-reductase (354 aa).

Residues lysine 44 and tyrosine 163 each coordinate NADP(+).

Belongs to the NAD(P)-dependent epimerase/dehydratase family. Dihydroflavonol-4-reductase subfamily.

It catalyses the reaction a (2R,3S,4S)-leucoanthocyanidin + NADP(+) = a (2R,3R)-dihydroflavonol + NADPH + H(+). It carries out the reaction (2S)-flavan-4-ol + NADP(+) = (2S)-flavanone + NADPH + H(+). The protein operates within pigment biosynthesis; anthocyanin biosynthesis. Functionally, bifunctional enzyme involved in flavonoid metabolism. The sequence is that of Dihydroflavonol 4-reductase (ANT18) from Hordeum vulgare (Barley).